Here is a 411-residue protein sequence, read N- to C-terminus: Dual specificity protein phosphatase Mpk3 (411 aa).

The 128-residue stretch at 22-149 (DSKDLILLDC…FRQAFPEWCE (128 aa)) folds into the Rhodanese domain. Low complexity predominate over residues 184–197 (DSACSSSAESSDCE). The disordered stretch occupies residues 184-209 (DSACSSSAESSDCESSSHHHHHHSHH). The Tyrosine-protein phosphatase domain occupies 214 to 358 (APVEIIPGLL…LLSFESQLRL (145 aa)). Catalysis depends on C302, which acts as the Phosphocysteine intermediate.

It belongs to the protein-tyrosine phosphatase family. Non-receptor class dual specificity subfamily. As to quaternary structure, interacts (via N-terminal region) with phosphorylated rl. As to expression, ubiquitous expression in eye and wing imaginal disks. Enriched in ovary.

Its subcellular location is the cytoplasm. The enzyme catalyses O-phospho-L-tyrosyl-[protein] + H2O = L-tyrosyl-[protein] + phosphate. It carries out the reaction O-phospho-L-seryl-[protein] + H2O = L-seryl-[protein] + phosphate. The catalysed reaction is O-phospho-L-threonyl-[protein] + H2O = L-threonyl-[protein] + phosphate. With respect to regulation, activity abolished by tyrosine phosphatase inhibitor sodium vanadate. Activated by rl. In terms of biological role, negatively regulates the activity of members of the MAP kinase family in response to changes in the cellular environment. Has a specificity for the ERK family. Acts as a negative regulator in a variety of developmental processes including cell differentiation and proliferation controlled by the Ras/ERK pathway. Suppresses the photoreceptor cell differentiation and wing vein formation. Required for proper oogenesis and early embryogenesis. Functions autonomously in a subset of photoreceptor progenitor cells in eye imaginal disks. Also appears to be required in surrounding non-neuronal cells for ommatidial patterning and photoreceptor differentiation. Plays a role in the maintenance of epithelial integrity during tracheal development. The sequence is that of Dual specificity protein phosphatase Mpk3 (Mkp3) from Drosophila melanogaster (Fruit fly).